Consider the following 585-residue polypeptide: Glutamate decarboxylase 2 (585 aa).

Positions 1-25 are disordered; sequence MASPGSGFWSFGSEDGSGDPENPST. Phosphoserine is present on residues Ser3, Ser6, Ser10, and Ser13. S-palmitoyl cysteine attachment occurs at residues Cys30 and Cys45. Residue 181–183 participates in substrate binding; sequence QLS. Lys396 carries the N6-(pyridoxal phosphate)lysine modification. Residue Arg558 coordinates substrate.

This sequence belongs to the group II decarboxylase family. Homodimer. Pyridoxal 5'-phosphate is required as a cofactor. Phosphorylated; which does not affect kinetic parameters or subcellular location. In terms of processing, palmitoylated; which is required for presynaptic clustering.

It is found in the cytoplasm. It localises to the cytosol. The protein resides in the cytoplasmic vesicle. The protein localises to the presynaptic cell membrane. Its subcellular location is the golgi apparatus membrane. The enzyme catalyses L-glutamate + H(+) = 4-aminobutanoate + CO2. Catalyzes the production of GABA. This chain is Glutamate decarboxylase 2 (GAD2), found in Canis lupus familiaris (Dog).